We begin with the raw amino-acid sequence, 288 residues long: Bifunctional protein FolD (288 aa).

166–168 (GRS) is an NADP(+) binding site.

Belongs to the tetrahydrofolate dehydrogenase/cyclohydrolase family. Homodimer.

It carries out the reaction (6R)-5,10-methylene-5,6,7,8-tetrahydrofolate + NADP(+) = (6R)-5,10-methenyltetrahydrofolate + NADPH. The catalysed reaction is (6R)-5,10-methenyltetrahydrofolate + H2O = (6R)-10-formyltetrahydrofolate + H(+). Its pathway is one-carbon metabolism; tetrahydrofolate interconversion. Its function is as follows. Catalyzes the oxidation of 5,10-methylenetetrahydrofolate to 5,10-methenyltetrahydrofolate and then the hydrolysis of 5,10-methenyltetrahydrofolate to 10-formyltetrahydrofolate. This is Bifunctional protein FolD from Levilactobacillus brevis (strain ATCC 367 / BCRC 12310 / CIP 105137 / JCM 1170 / LMG 11437 / NCIMB 947 / NCTC 947) (Lactobacillus brevis).